The chain runs to 468 residues: ATP synthase subunit beta (468 aa).

155–162 (GGAGVGKT) contributes to the ATP binding site.

It belongs to the ATPase alpha/beta chains family. In terms of assembly, F-type ATPases have 2 components, CF(1) - the catalytic core - and CF(0) - the membrane proton channel. CF(1) has five subunits: alpha(3), beta(3), gamma(1), delta(1), epsilon(1). CF(0) has three main subunits: a(1), b(2) and c(9-12). The alpha and beta chains form an alternating ring which encloses part of the gamma chain. CF(1) is attached to CF(0) by a central stalk formed by the gamma and epsilon chains, while a peripheral stalk is formed by the delta and b chains.

It localises to the cell membrane. It carries out the reaction ATP + H2O + 4 H(+)(in) = ADP + phosphate + 5 H(+)(out). Produces ATP from ADP in the presence of a proton gradient across the membrane. The catalytic sites are hosted primarily by the beta subunits. The sequence is that of ATP synthase subunit beta from Streptococcus pneumoniae (strain CGSP14).